A 430-amino-acid chain; its full sequence is MAAIVIVGAQWGDEGKGKATDILGGLVDYVVKPNGGNNAGHTVVVGGEKYELKLLPAGVLSETATPILGNGVVINLEALFEEIDGLEARGADASRLRISANAHLVAPYHQVMDRVQERFLGKRAIGTTGRGIGPTYADKVSRVGIRVQDIFDESILRQKVESALDYKNQVLVKMYNRKAIVAEEIVQYFLSYADRLRPMVIDATLVLNEALDQGKHVLMEGGQATMLDVDHGTYPFVTSSNPTAGGASVGSGIGPTKITSSLGIIKAYTTRVGAGPFPTELFDKWGEYLQTVGGEVGVNTGRKRRCGWYDSVIARYASRVNGFTDYFLTKLDVLTGIGEIPICVAYDVDGVRHDEMPLTQSEFHHATPIFETMPAWDEDITDCKTFEDLPQKAQDYVRRLEELSGARFSYIGVGPGRDQTIVLHDVLADN.

GTP-binding positions include 12-18 (GDEGKGK) and 40-42 (GHT). The active-site Proton acceptor is Asp-13. 2 residues coordinate Mg(2+): Asp-13 and Gly-40. Residues 13–16 (DEGK), 38–41 (NAGH), Thr-128, Arg-142, Gln-223, Thr-238, and Arg-302 each bind IMP. The Proton donor role is filled by His-41. Position 298 to 304 (298 to 304 (VNTGRKR)) interacts with substrate. GTP contacts are provided by residues Arg-304, 330 to 332 (KLD), and 412 to 414 (GVG).

This sequence belongs to the adenylosuccinate synthetase family. As to quaternary structure, homodimer. Requires Mg(2+) as cofactor.

It is found in the cytoplasm. The enzyme catalyses IMP + L-aspartate + GTP = N(6)-(1,2-dicarboxyethyl)-AMP + GDP + phosphate + 2 H(+). The protein operates within purine metabolism; AMP biosynthesis via de novo pathway; AMP from IMP: step 1/2. Plays an important role in the de novo pathway of purine nucleotide biosynthesis. Catalyzes the first committed step in the biosynthesis of AMP from IMP. This Corynebacterium glutamicum (strain ATCC 13032 / DSM 20300 / JCM 1318 / BCRC 11384 / CCUG 27702 / LMG 3730 / NBRC 12168 / NCIMB 10025 / NRRL B-2784 / 534) protein is Adenylosuccinate synthetase.